The following is a 383-amino-acid chain: NIPA-like protein 2 (383 aa).

N-linked (GlcNAc...) asparagine glycosylation is found at Asn23 and Asn33. 7 consecutive transmembrane segments (helical) span residues 46 to 66, 88 to 108, 110 to 130, 144 to 164, 177 to 197, 209 to 229, and 243 to 263; these read IHLF…ISLN, VLWW…FAAY, FAPI…SAII, LLGT…APNI, LVGW…CILL, VILL…VKAV, and LTYP…VFQV. Asn274 carries an N-linked (GlcNAc...) asparagine glycan. 2 helical membrane passes run 278 to 298 and 306 to 326; these read VVPV…IIFY and FLTV…VFLV. Positions 355–383 are disordered; the sequence is QPDSHSLSYGTLPDGSDSTKSQSGEKKEV.

Belongs to the NIPA family.

It is found in the membrane. This is NIPA-like protein 2 (NIPAL2) from Homo sapiens (Human).